We begin with the raw amino-acid sequence, 367 residues long: Ferrochelatase (367 aa).

The Fe cation site is built by H213 and E294.

This sequence belongs to the ferrochelatase family.

The protein localises to the cytoplasm. It catalyses the reaction heme b + 2 H(+) = protoporphyrin IX + Fe(2+). It functions in the pathway porphyrin-containing compound metabolism; protoheme biosynthesis; protoheme from protoporphyrin-IX: step 1/1. Catalyzes the ferrous insertion into protoporphyrin IX. The sequence is that of Ferrochelatase from Dechloromonas aromatica (strain RCB).